The sequence spans 445 residues: Arginine/agmatine antiporter (445 aa).

Residues 1 to 12 (MSSDADAHKVGL) are Cytoplasmic-facing. Residues 13 to 24 (IPVTLMVSGNIM) traverse the membrane as a helical segment. L-arginine-binding residues include isoleucine 23, serine 26, and glycine 27. Residues 25 to 27 (GSG) carry the Helix-breaking GSG motif TM1 motif. Over 25-42 (GSGVFLLPANLASTGGIA) the chain is Periplasmic. The helical transmembrane segment at 43-61 (IYGWLVTIIGALGLSMVYA) threads the bilayer. Topologically, residues 62-86 (KMSFLDPSPGGSYAYARRCFGPFLG) are cytoplasmic. Residues 87-112 (YQTNVLYWLACWIGNIAMVVIGVGYL) traverse the membrane as a helical segment. Residues alanine 96, cysteine 97, and asparagine 101 each coordinate L-arginine. The Periplasmic segment spans residues 113–124 (SYFFPILKDPLV). The chain crosses the membrane as a helical span at residues 125 to 142 (LTITCVVVLWIFVLLNIV). Glycine 143 is a topological domain (cytoplasmic). Residues 144–171 (PKMITRVQAVATVLALIPIVGIAVFGWF) form a helical membrane-spanning segment. Residues 172–194 (WFRGETYMAAWNVSGLGTFGAIQ) lie on the Periplasmic side of the membrane. Residues 195 to 207 (STLNVTLWSFIGV) form a helical membrane-spanning segment. Residues tryptophan 202 and isoleucine 205 each contribute to the L-arginine site. A Helix-breaking GVESA motif TM6 motif is present at residues 206-210 (GVESA). Topologically, residues 208–226 (ESASVAAGVVKNPKRNVPI) are cytoplasmic. Residues 227 to 247 (ATIGGVLIAAVCYVLSTTAIM) form a helical membrane-spanning segment. Residues 248–277 (GMIPNAALRVSASPFGDAARMALGDTAGAI) are Periplasmic-facing. Residues 278-301 (VSFCAAAGCLGSLGGWTLLAGQTA) traverse the membrane as a helical segment. Tryptophan 293 lines the L-arginine pocket. The Cytoplasmic portion of the chain corresponds to 302–323 (KAAADDGLFPPIFARVNKAGTP). The helical transmembrane segment at 324-340 (VAGLIIVGILMTIFQLS) threads the bilayer. Residues 341–352 (SISPNATKEFGL) are Periplasmic-facing. A helical transmembrane segment spans residues 353 to 370 (VSSVSVIFTLVPYLYTCA). Serine 357 is a binding site for L-arginine. The Cytoplasmic portion of the chain corresponds to 371 to 388 (ALLLLGHGHFGKARPAYL). A helical transmembrane segment spans residues 389-404 (AVTTIAFLYCIWAVVG). The Periplasmic portion of the chain corresponds to 405–407 (SGA). The chain crosses the membrane as a helical span at residues 408 to 426 (KEVMWSFVTLMVITAMYAL). The Cytoplasmic segment spans residues 427 to 445 (NYNRLHKNPYPLDAPISKD).

It belongs to the amino acid-polyamine-organocation (APC) superfamily. Basic amino acid/polyamine antiporter (APA) (TC 2.A.3.2) family. In terms of assembly, homodimer;each subunit has its own individual transport capacity.

Its subcellular location is the cell inner membrane. The catalysed reaction is agmatine(in) + L-arginine(out) = agmatine(out) + L-arginine(in). Functionally, major component of the acid-resistance (AR) system allowing enteric pathogens to survive the acidic environment in the stomach. Exchanges extracellular arginine for its intracellular decarboxylation product agmatine (Agm) thereby expelling intracellular protons. Probably undergoes several conformational states in order to translocate the substrate across the membrane; keeps the substrate accessible to only 1 side of the membrane at a time by opening and closing 3 membrane-internal gates. This chain is Arginine/agmatine antiporter (adiC), found in Escherichia coli O157:H7.